Consider the following 284-residue polypeptide: Phosphatidylglycerol--prolipoprotein diacylglyceryl transferase (284 aa).

7 helical membrane-spanning segments follow: residues 18–38, 62–82, 106–126, 136–156, 190–210, 218–238, and 252–272; these read LGGI…VIAF, YFLW…VLIY, FVGI…IASY, LLIY…FGRI, PSQL…VLWA, GLLI…AEFY, and LSMG…ILLY. An a 1,2-diacyl-sn-glycero-3-phospho-(1'-sn-glycerol)-binding site is contributed by Arg155.

It belongs to the Lgt family.

The protein resides in the cell inner membrane. It catalyses the reaction L-cysteinyl-[prolipoprotein] + a 1,2-diacyl-sn-glycero-3-phospho-(1'-sn-glycerol) = an S-1,2-diacyl-sn-glyceryl-L-cysteinyl-[prolipoprotein] + sn-glycerol 1-phosphate + H(+). The protein operates within protein modification; lipoprotein biosynthesis (diacylglyceryl transfer). In terms of biological role, catalyzes the transfer of the diacylglyceryl group from phosphatidylglycerol to the sulfhydryl group of the N-terminal cysteine of a prolipoprotein, the first step in the formation of mature lipoproteins. This chain is Phosphatidylglycerol--prolipoprotein diacylglyceryl transferase, found in Helicobacter pylori (strain G27).